We begin with the raw amino-acid sequence, 131 residues long: Protein SOB FIVE-LIKE 4 (131 aa).

Disordered regions lie at residues 1-21 (MDKEECSSSESGWTTYLSSPI) and 40-131 (IYNY…YRMK). Residues 8 to 18 (SSESGWTTYLS) show a composition bias toward polar residues. An SOFL-A motif is present at residues 11-16 (SGWTTY). The span at 46–58 (KVEHEEERNKDSD) shows a compositional bias: basic and acidic residues. The SOFL-B signature appears at 60 to 69 (SMASDASSGP). Basic and acidic residues predominate over residues 79-109 (KALDLKNGKNEGNSKSKNDDDHHNHYHDGKK). A Nuclear localization signal motif is present at residues 107 to 114 (GKKTSNSY). Over residues 114–131 (YRKKDKKKRENKSTYRMK) the composition is skewed to basic residues.

Belongs to the SOFL plant protein family. As to expression, expressed, at low levels, in seedlings, roots, flowers and siliques.

Its subcellular location is the cytoplasm. It localises to the nucleus. Involved in cytokinin-mediated development. In Arabidopsis thaliana (Mouse-ear cress), this protein is Protein SOB FIVE-LIKE 4.